A 157-amino-acid chain; its full sequence is Phosphopantetheine adenylyltransferase (157 aa).

Thr8 lines the substrate pocket. Residues 8–9 (TF) and His16 each bind ATP. Substrate-binding residues include Lys40, Thr72, and Arg86. ATP contacts are provided by residues 87–89 (GLR), Glu97, and 122–128 (YSFLSSS).

The protein belongs to the bacterial CoaD family. Homohexamer. The cofactor is Mg(2+).

The protein localises to the cytoplasm. The enzyme catalyses (R)-4'-phosphopantetheine + ATP + H(+) = 3'-dephospho-CoA + diphosphate. Its pathway is cofactor biosynthesis; coenzyme A biosynthesis; CoA from (R)-pantothenate: step 4/5. Reversibly transfers an adenylyl group from ATP to 4'-phosphopantetheine, yielding dephospho-CoA (dPCoA) and pyrophosphate. In Prochlorococcus marinus (strain MIT 9312), this protein is Phosphopantetheine adenylyltransferase.